Here is a 2221-residue protein sequence, read N- to C-terminus: MAYFLPSFFQKRLLRYALSRLGLVDTEALDLDSLGIRWGQRSTVELRDIGLRLDKLATLLHLPASSELVSARIRFLKITVPADIYSSGIICQASGIDVHLRLLSDETRHAGQGDRPMGSGPGHDSASDPIIPNPTDLAQSFLQAEPKEEREELKAAISSQSQVLHRTSTSGSDDEEELGYGNEGVSLPSFVAAFLKGVADRLQVQVDDISIRVDMETKQDAPLKRQPEDKPDLVTGLLTVGQVKVDAVSSSSNENEASSRNQRRLISLSDINVALVSEPAVFSNYSRFTAPTSPESTSPESPLQPKPSPPPSHVSSPPSEHASEEDTALDLTRSIMFEPSRGMSESKIIEQYAPEMEGSVCTYDGRFSDADTEEETRSHGNMGESQNLLVDDEILDNPAYLDSVIDSHLHDDELDGIGHFPPEVGQRALGNEDTPRLRTPELHAAGSASHYSDTQNAMILAPRSQVPAVTSLAQDKLQIPEAVDIATRPALPAIELEVTQDPQPCADNQTSPVTSVPPSEASSSSSTSGSFNQDELSESRLFSNEEAQSMYMSAVSHDSMSRSFMPNIPGAWDSPESTVVRDSHAHMHHENGRDVQHMDPDHEDDDEAVATPKLTAQAGMHISQECLIDDSPEAHRDPTDKELSRSSSGLNKFTDVARRFFSIDKVVISIPSMDEDGDSADNTPSASYTEEDTRGLEETTACLRDSATEDYFAPPGRKASTRTRSDTIRPASYGYEGAEKGSSQPSQSDGQAQSRRSPNDMEIEVFSAELQFDIAIGWLVLKVGHKILHAFSNDSEVSQQTGQPQEEVQKRQAIKLALRKFSIKFVEHVPGHSYPAETDSSPFFGLLHNDILLQTCLSGLEAHLSIDKDITKLHLNIKKFSLGFASEHLISFSEDFKMRDSVRDVLSAEQGDIDLSITKSPDSTTVNLMTLPLQLNLNIQRLEEAIGWFGGLSTILELGNSISSASSGKGPKKEAPKRPRGVHFEEFPPPAASERTGSAPLKVNVRIGGLAADVVGETHYVKLRTTAAKIISRSSGVAVQIDKAKLTGPLPLDETRDAPAKLSLTDIRIEYRFSPKEEDLDRLLGLITPSKDKYDEDDDIMLDTLFRQRRQGSVLCLTISGARVAVSRTTDLDSISQLADELSRLSNVTKYLPEDDRPGVLTLALVRELEVQVHIGGKVGEMSAILRNTELAFISLPSLIAAQLGSITVARNRDEELVGEASAIGHKSSLSQSPLPVLMARYIADEMDPTVKVKLHNFRAEYTLPSIIAFLGLSDDMTTGDVAANMASSLANLAELQPPHHDVQLPEKGGRSDTPSKPIKLTVDLRDCVLGLNPRGTGAKGLVVLTTAKFSGAIHDPVSSDATLELRKASLMIIDDVANVGYADNVQRRSSAPPHSNQVQSFIDHGFVTVCTISSATATVKIMRLSDDGAKSLDVELRDDLLILETCADSTQTLISIVNGLQPPTPPSAAAKYRTEVLPIQDMLSSFTGDAFFTDMPEPPETTDSPDQNQGAGHLEDERDYVSDFKHVSAVPEHGSLTEGMMASGSNELLDSFHSQYYVSSSISELDFREDHFAQKSAVGGTAHRWDSTQNTYGLSDDSKLQKSPLRIRVRDAHVIWNLFDGYDWQRTRDTISKAVKDVERKAIERRARAGSRASPSFDEEEESVIGDCLFNSIYIGVPANKDPRDIRNDINRNIDDLASETGSYATTTTVTGATVRQSQSPSVRGKKLRLSRSKYHKMTFELKGICADLVVFPPDSGETQSSLDVRIKDLEVFDHVPTSTWKKFATYMHEAGEKESGTSMVHLEILTVRPVPQLAATEIVLKATILPLRLHVDQDALDFICRFFEFRDDSAPTPTAPSDVPFLQRVEINAVPVRLDFKPKRVDYAGLRSGRTTEFMNFFILDAADMTMRHVIIYGVSGFDKLGQTLNDIWMPDIKRNQLPGVLAGLAPIRSLVNVGGGVKDLVAVPVREYRKDGRLVRSIQKGALSFAKTTSNELVKLGAKLAIGTQTVLQGAEDLLTTPNASGAGVEDEYADDEEAKKISLYADQPVGVVQGLRGAFRGLERDLLLTRDAIVAVPGEVIESGSAKAAAKAVWKRAPTVVLRPAIGVSKAVGQTLLGAGNTLDPSNRRKMEDVSYTFPQRADSILTLLAEIQAPLTTFVAITLAVLSASSSSWDGYGAIDWDIYRSRSHIHLRAGRYRSTQDDNKMDACSHLKDFIRGGS.

Disordered regions lie at residues 108-135, 148-181, 288-327, 502-537, 575-606, 629-648, 672-758, 963-996, 1297-1318, and 1495-1514; these read RHAG…PNPT, EERE…LGYG, FTAP…EEDT, PQPC…DELS, PEST…EDDD, DDSP…RSSS, SMDE…RRSP, SSAS…SERT, QPPH…PSKP, and DMPE…GAGH. Over residues 157-171 the composition is skewed to polar residues; that stretch reads ISSQSQVLHRTSTSG. Over residues 291–301 the composition is skewed to low complexity; sequence PTSPESTSPES. Over residues 302 to 312 the composition is skewed to pro residues; sequence PLQPKPSPPPS. Positions 510-530 are enriched in low complexity; the sequence is TSPVTSVPPSEASSSSSTSGS. 2 stretches are compositionally biased toward basic and acidic residues: residues 579–600 and 632–644; these read VVRD…HMDP and PEAH…KELS. Positions 741-756 are enriched in polar residues; the sequence is GSSQPSQSDGQAQSRR. 2 stretches are compositionally biased toward basic and acidic residues: residues 971-986 and 1298-1311; these read PKKE…HFEE and PPHH…KGGR. The span at 1502–1511 shows a compositional bias: polar residues; the sequence is TTDSPDQNQG.

This sequence belongs to the ATG2 family.

The protein localises to the preautophagosomal structure membrane. It is found in the endoplasmic reticulum membrane. It carries out the reaction a 1,2-diacyl-sn-glycero-3-phosphocholine(in) = a 1,2-diacyl-sn-glycero-3-phosphocholine(out). The enzyme catalyses a 1,2-diacyl-sn-glycero-3-phospho-L-serine(in) = a 1,2-diacyl-sn-glycero-3-phospho-L-serine(out). It catalyses the reaction a 1,2-diacyl-sn-glycero-3-phosphoethanolamine(in) = a 1,2-diacyl-sn-glycero-3-phosphoethanolamine(out). Its function is as follows. Lipid transfer protein required for autophagosome completion and peroxisome degradation. Tethers the edge of the isolation membrane (IM) to the endoplasmic reticulum (ER) and mediates direct lipid transfer from ER to IM for IM expansion. Atg2 binds to the ER exit site (ERES), which is the membrane source for autophagosome formation, using basic residues in its N-terminal region (NR) and to the expanding edge of the IM through its C-terminal region. The latter binding is assisted by an atg18-PtdIns3P interaction. Atg2 then extracts phospholipids from the membrane source using its NR and transfers them to atg9 to the IM through its predicted beta-sheet-rich structure for membrane expansion. This Aspergillus niger (strain ATCC MYA-4892 / CBS 513.88 / FGSC A1513) protein is Autophagy-related protein 2 (atg2).